We begin with the raw amino-acid sequence, 439 residues long: U1 small nuclear ribonucleoprotein 70 kDa (439 aa).

The residue at position 2 (T2) is an N-acetylthreonine. Residues 48–79 (FEDPRDAPPPTRAETREERMERKRREKIERRQ) form a disordered region. Over residues 60 to 79 (AETREERMERKRREKIERRQ) the composition is skewed to basic and acidic residues. Positions 92 to 202 (HNDPNAQGDA…GGGLGGTRRG (111 aa)) are required for interaction with U1 RNA. Residues 103–181 (KTLFVARVNY…RRVLVDVERG (79 aa)) form the RRM domain. K118 is subject to N6-acetyllysine. Y126 is modified (phosphotyrosine). The interval 187 to 439 (WRPRRLGGGL…NGYLMEAAPE (253 aa)) is disordered. The segment covering 192–201 (LGGGLGGTRR) has biased composition (gly residues). Residues 207–254 (NIRHSGRDDTSRYDERPGPSPLPHRDRDRDRERERRERSRERDKERER) show a composition bias toward basic and acidic residues. 2 positions are modified to phosphoserine: S226 and S268. The segment covering 255–268 (RRSRSRDRRRRSRS) has biased composition (basic residues). Composition is skewed to basic and acidic residues over residues 269–286 (RDKEERRRSRERSKDKDR) and 294–310 (RSRERARRERERKEELR). Residue S323 is modified to Phosphoserine. Basic and acidic residues predominate over residues 346–394 (PEEKGRDRDRDRRRSHRSERERRRDRDRDRDREHKRGERGGDRGRDEAR). K349 is covalently cross-linked (Glycyl lysine isopeptide (Lys-Gly) (interchain with G-Cter in SUMO2)). Over residues 395-410 (GGGGGGQDNGLEGLGN) the composition is skewed to gly residues.

As to quaternary structure, component of the U1 snRNP. The U1 snRNP is composed of the U1 snRNA and the 7 core Sm proteins SNRPB, SNRPD1, SNRPD2, SNRPD3, SNRPE, SNRPF and SNRPG that assemble in a heptameric protein ring on the Sm site of the small nuclear RNA to form the core snRNP, and at least three U1 snRNP-specific proteins SNRNP70/U1-70K, SNRPA/U1-A and SNRPC/U1-C. Interacts with SCNM1. Found in a pre-mRNA splicing complex with SFRS4, SFRS5, SNRNP70, SNRPA1, SRRM1 and SRRM2. Found in a pre-mRNA exonic splicing enhancer (ESE) complex with SNRNP70, SNRPA1, SRRM1 and TRA2B/SFRS10. Interacts with dephosphorylated SFRS13A and SFPQ. Interacts with NUDT21/CPSF5, CPSF6, SCAF11, and ZRANB2. Interacts with GEMIN5. Interacts with FUS. Extensively phosphorylated on serine residues in the C-terminal region.

Its subcellular location is the nucleus speckle. The protein resides in the nucleus. It localises to the nucleoplasm. In terms of biological role, component of the spliceosomal U1 snRNP, which is essential for recognition of the pre-mRNA 5' splice-site and the subsequent assembly of the spliceosome. SNRNP70 binds to the loop I region of U1-snRNA. The polypeptide is U1 small nuclear ribonucleoprotein 70 kDa (SNRNP70) (Bos taurus (Bovine)).